The sequence spans 239 residues: Phosphoribosylaminoimidazole-succinocarboxamide synthase (239 aa).

The protein belongs to the SAICAR synthetase family.

It catalyses the reaction 5-amino-1-(5-phospho-D-ribosyl)imidazole-4-carboxylate + L-aspartate + ATP = (2S)-2-[5-amino-1-(5-phospho-beta-D-ribosyl)imidazole-4-carboxamido]succinate + ADP + phosphate + 2 H(+). It participates in purine metabolism; IMP biosynthesis via de novo pathway; 5-amino-1-(5-phospho-D-ribosyl)imidazole-4-carboxamide from 5-amino-1-(5-phospho-D-ribosyl)imidazole-4-carboxylate: step 1/2. This is Phosphoribosylaminoimidazole-succinocarboxamide synthase from Acinetobacter baumannii (strain AB307-0294).